The sequence spans 312 residues: tRNA dimethylallyltransferase (312 aa).

19-26 (GPSGSGKS) provides a ligand contact to ATP. 21 to 26 (SGSGKS) contributes to the substrate binding site. The tract at residues 44–47 (DSLS) is interaction with substrate tRNA.

This sequence belongs to the IPP transferase family. Monomer. Requires Mg(2+) as cofactor.

It carries out the reaction adenosine(37) in tRNA + dimethylallyl diphosphate = N(6)-dimethylallyladenosine(37) in tRNA + diphosphate. In terms of biological role, catalyzes the transfer of a dimethylallyl group onto the adenine at position 37 in tRNAs that read codons beginning with uridine, leading to the formation of N6-(dimethylallyl)adenosine (i(6)A). This chain is tRNA dimethylallyltransferase, found in Helicobacter pylori (strain J99 / ATCC 700824) (Campylobacter pylori J99).